The following is a 198-amino-acid chain: Transcription factor FapR (198 aa).

The MaoC-like domain maps to 102-169 (NRIARGHHLF…RTIVEVNSYV (68 aa)).

It belongs to the FapR family.

Functionally, transcriptional factor involved in regulation of membrane lipid biosynthesis by repressing genes involved in fatty acid and phospholipid metabolism. The chain is Transcription factor FapR from Geobacillus sp. (strain WCH70).